Here is a 509-residue protein sequence, read N- to C-terminus: Zinc finger CCCH-type with G patch domain-containing protein (509 aa).

A C3H1-type zinc finger spans residues 155–178; sequence PCNYYLEGECRFDEIRCRYSHGAL. Positions 253–277 are disordered; the sequence is EEDGLTSEDSSSSPHDESSDEIDSD. In terms of domain architecture, G-patch spans 310–356; it reads TRGIGSKLMEKMGYIHGTGLGSEGRGIVTPVSAQILPQGRSLDACME. The disordered stretch occupies residues 409–430; the sequence is GGESRHQGDQAAKKAKTNDLQQ. The segment covering 411–420 has biased composition (basic and acidic residues); sequence ESRHQGDQAA.

The protein resides in the nucleus. Its function is as follows. Transcription repressor. In Drosophila persimilis (Fruit fly), this protein is Zinc finger CCCH-type with G patch domain-containing protein.